A 317-amino-acid chain; its full sequence is Probable cell division protein WhiA (317 aa).

The H-T-H motif DNA-binding region spans Ser-278–Gln-311.

Belongs to the WhiA family.

Involved in cell division and chromosome segregation. This Lachnospira eligens (strain ATCC 27750 / DSM 3376 / VPI C15-48 / C15-B4) (Eubacterium eligens) protein is Probable cell division protein WhiA.